Here is a 461-residue protein sequence, read N- to C-terminus: Fumarate hydratase class II (461 aa).

Substrate contacts are provided by residues 98–100 (SGT), 129–132 (HPND), 139–141 (SSN), and threonine 187. Residue histidine 188 is the Proton donor/acceptor of the active site. Serine 318 is a catalytic residue. Substrate contacts are provided by residues serine 319 and 324-326 (KVN).

Belongs to the class-II fumarase/aspartase family. Fumarase subfamily. As to quaternary structure, homotetramer.

It is found in the cytoplasm. The catalysed reaction is (S)-malate = fumarate + H2O. It functions in the pathway carbohydrate metabolism; tricarboxylic acid cycle; (S)-malate from fumarate: step 1/1. Functionally, involved in the TCA cycle. Catalyzes the stereospecific interconversion of fumarate to L-malate. In Rickettsia prowazekii (strain Madrid E), this protein is Fumarate hydratase class II.